Here is a 792-residue protein sequence, read N- to C-terminus: Zinc finger protein 606 (792 aa).

The region spanning 62 to 133 (VTFKDVAVDF…EQACPQRTCP (72 aa)) is the KRAB domain. The C2H2-type 1; degenerate zinc finger occupies 289 to 311 (FKCTDAVKSFNHIIHFGDHKGIH). The C2H2-type 2; degenerate zinc finger occupies 317-344 (YEYKECHQIFNQSPSFNEHPRLHVGENQ). The segment at 400 to 422 (YDYNECGTSFIWSSYLIQHKKTH) adopts a C2H2-type 3; degenerate zinc-finger fold. 13 C2H2-type zinc fingers span residues 428–450 (YECDKCGKVFRNRSALTKHERTH), 456–478 (YECNKCGKAFSWNSHLIVHKRIH), 484–506 (YVCNECGKSFNWNSHLIGHQRTH), 512–534 (FECTECGKSFSWSSHLIAHMRMH), 540–562 (FKCDECEKAFRDYSALSKHERTH), 568–590 (YKCTECGKSFSWSSHLIAHQRTH), 596–618 (YNCQECGKAFRERSALTKHEIIH), 624–646 (YECNKCGKSCSQMAHLVRHQRTH), 652–674 (YECNKCGKSFSQSCHLVAHRRIH), 680–702 (YKCNQCERSFNCSSHLIAHRRTH), 708–730 (YRCNECGKAFNESSSLIVHLRNH), 736–758 (YKCNHCEKAFCKNSSLIIHQRMH), and 764–786 (FICSECGKAFSGHSALLQHQRNH).

It belongs to the krueppel C2H2-type zinc-finger protein family. Widely expressed in adult and fetal tissues.

The protein resides in the nucleus. Functionally, may act as a transcriptional repressor. In Homo sapiens (Human), this protein is Zinc finger protein 606 (ZNF606).